A 515-amino-acid polypeptide reads, in one-letter code: Bifunctional pantoate ligase/cytidylate kinase (515 aa).

Residues M1–V279 form a pantoate--beta-alanine ligase region. An ATP-binding site is contributed by M31–H38. The active-site Proton donor is H38. A (R)-pantoate-binding site is contributed by Q62. Q62 serves as a coordination point for beta-alanine. G149–D152 serves as a coordination point for ATP. Q155 contacts (R)-pantoate. ATP is bound by residues V178 and L186–R189. Residues V280–V515 form a cytidylate kinase region.

This sequence in the N-terminal section; belongs to the pantothenate synthetase family. It in the C-terminal section; belongs to the cytidylate kinase family. Type 1 subfamily.

The protein localises to the cytoplasm. It carries out the reaction (R)-pantoate + beta-alanine + ATP = (R)-pantothenate + AMP + diphosphate + H(+). The catalysed reaction is CMP + ATP = CDP + ADP. It catalyses the reaction dCMP + ATP = dCDP + ADP. It participates in cofactor biosynthesis; (R)-pantothenate biosynthesis; (R)-pantothenate from (R)-pantoate and beta-alanine: step 1/1. In terms of biological role, catalyzes the condensation of pantoate with beta-alanine in an ATP-dependent reaction via a pantoyl-adenylate intermediate. Catalyzes the transfer of a phosphate group from ATP to either CMP or dCMP to form CDP or dCDP and ADP, respectively. The protein is Bifunctional pantoate ligase/cytidylate kinase of Gloeobacter violaceus (strain ATCC 29082 / PCC 7421).